Consider the following 70-residue polypeptide: Small ribosomal subunit protein bS21 (70 aa).

Belongs to the bacterial ribosomal protein bS21 family.

The sequence is that of Small ribosomal subunit protein bS21 from Azoarcus sp. (strain BH72).